The following is a 575-amino-acid chain: Phosphoenolpyruvate-protein phosphotransferase (575 aa).

Catalysis depends on H189, which acts as the Tele-phosphohistidine intermediate. Phosphoenolpyruvate is bound by residues R296 and R332. E431 and D455 together coordinate Mg(2+). Residues 454 to 455 (ND) and R465 contribute to the phosphoenolpyruvate site. C502 (proton donor) is an active-site residue.

It belongs to the PEP-utilizing enzyme family. In terms of assembly, homodimer. It depends on Mg(2+) as a cofactor.

It localises to the cytoplasm. The enzyme catalyses L-histidyl-[protein] + phosphoenolpyruvate = N(pros)-phospho-L-histidyl-[protein] + pyruvate. Functionally, general (non sugar-specific) component of the phosphoenolpyruvate-dependent sugar phosphotransferase system (sugar PTS). This major carbohydrate active-transport system catalyzes the phosphorylation of incoming sugar substrates concomitantly with their translocation across the cell membrane. Enzyme I transfers the phosphoryl group from phosphoenolpyruvate (PEP) to the phosphoryl carrier protein (HPr). The sequence is that of Phosphoenolpyruvate-protein phosphotransferase (ptsI) from Salmonella typhimurium (strain LT2 / SGSC1412 / ATCC 700720).